The primary structure comprises 307 residues: Mitochondrial brown fat uncoupling protein 1 (307 aa).

At 2-10 the chain is on the mitochondrial intermembrane side; sequence VNPTTSEVH. A helical membrane pass occupies residues 11–32; that stretch reads PTMGVKIFSAGVAACLADIITF. Solcar repeat units follow at residues 11–102, 111–201, and 210–295; these read PTMG…VQEY, PTLG…MKGA, and DDVP…LKKE. Residues 33-73 lie on the Mitochondrial matrix side of the membrane; sequence PLDTAKVRLQIQGEGQISSTIRYKGVLGTITTLAKTEGLPK. K56 is a fatty acid 16:0 binding site. The chain crosses the membrane as a helical span at residues 74–96; sequence LYSGLPAGIQRQISFASLRIGLY. At 97 to 116 the chain is on the mitochondrial intermembrane side; it reads DTVQEYFSSGKETPPTLGNR. A helical membrane pass occupies residues 117–133; it reads ISAGLMTGGVAVFIGQP. Residues 134–178 lie on the Mitochondrial matrix side of the membrane; the sequence is TEVVKVRLQAQSHLHGIKPRYTGTYNAYRIIATTESFSTLWKGTT. A helical membrane pass occupies residues 179-195; sequence PNLLRNVIINCVELVTY. Residues 196 to 212 lie on the Mitochondrial intermembrane side of the membrane; it reads DLMKGALVNNQILADDV. A helical membrane pass occupies residues 213-232; the sequence is PCHLLSAFVAGFCTTFLASP. Over 233-266 the chain is Mitochondrial matrix; it reads ADVVKTRFINSLPGQYPSVPSCAMTMLTKEGPTA. C254 is modified (cysteine sulfenic acid (-SOH)). A helical membrane pass occupies residues 267–289; sequence FFKGFVPSFLRLASWNVIMFVCF. K269 is a binding site for fatty acid 16:0. Topologically, residues 290 to 307 are mitochondrial intermembrane; the sequence is EQLKKELSKSRQTVDCTT.

The protein belongs to the mitochondrial carrier (TC 2.A.29) family. In terms of assembly, most probably functions as a monomer. Binds one purine nucleotide per monomer. However, has also been suggested to function as a homodimer or a homotetramer. Tightly associates with cardiolipin in the mitochondrion inner membrane; may stabilize and regulate its activity. May undergo sulfenylation upon cold exposure. May increase the sensitivity of UCP1 thermogenic function to the activation by noradrenaline probably through structural effects. Post-translationally, may undergo ubiquitin-mediated proteasomal degradation. As to expression, brown adipose tissue.

The protein localises to the mitochondrion inner membrane. The catalysed reaction is H(+)(in) = H(+)(out). Has no constitutive proton transporter activity and has to be activated by long-chain fatty acids/LCFAs. Inhibited by purine nucleotides. Both purine nucleotides and LCFAs bind the cytosolic side of the transporter and directly compete to activate or inhibit it. Activated by noradrenaline and reactive oxygen species. Despite lacking canonical translational encoding for selenocysteine, a small pool of the protein has been observed to selectively incorporate selenocysteine at 'Cys-254'. Selenocysteine-modified protein is highly sensitive to redox modification and may constitute a pool of protein highly sensitive to activation by elevated levels of reactive oxygen species (ROS). In terms of biological role, mitochondrial protein responsible for thermogenic respiration, a specialized capacity of brown adipose tissue and beige fat that participates in non-shivering adaptive thermogenesis to temperature and diet variations and more generally to the regulation of energy balance. Functions as a long-chain fatty acid/LCFA and proton symporter, simultaneously transporting one LCFA and one proton through the inner mitochondrial membrane. However, LCFAs remaining associated with the transporter via their hydrophobic tails, it results in an apparent transport of protons activated by LCFAs. Thereby, dissipates the mitochondrial proton gradient and converts the energy of substrate oxydation into heat instead of ATP. Regulates the production of reactive oxygen species/ROS by mitochondria. This Mesocricetus auratus (Golden hamster) protein is Mitochondrial brown fat uncoupling protein 1.